The sequence spans 123 residues: Large ribosomal subunit protein bL12 (123 aa).

The protein belongs to the bacterial ribosomal protein bL12 family. In terms of assembly, homodimer. Part of the ribosomal stalk of the 50S ribosomal subunit. Forms a multimeric L10(L12)X complex, where L10 forms an elongated spine to which 2 to 4 L12 dimers bind in a sequential fashion. Binds GTP-bound translation factors.

Its function is as follows. Forms part of the ribosomal stalk which helps the ribosome interact with GTP-bound translation factors. Is thus essential for accurate translation. This is Large ribosomal subunit protein bL12 from Mycoplasmopsis agalactiae (strain NCTC 10123 / CIP 59.7 / PG2) (Mycoplasma agalactiae).